Reading from the N-terminus, the 684-residue chain is Sec1 family domain-containing protein 2 (684 aa).

The protein belongs to the STXBP/unc-18/SEC1 family.

In terms of biological role, may be involved in protein transport. The protein is Sec1 family domain-containing protein 2 (SCFD2) of Homo sapiens (Human).